The chain runs to 210 residues: PEP-dependent dihydroxyacetone kinase, ADP-binding subunit DhaL (210 aa).

The 201-residue stretch at 6-206 (TQIVNWLTRC…VMFMMQMLAL (201 aa)) folds into the DhaL domain. Asp30, Asp35, and Asp37 together coordinate Mg(2+). ADP is bound by residues 38-41 (HGLN), 79-80 (AS), Gly121, Met130, Arg178, and 191-193 (DPG).

In terms of assembly, homodimer. The dihydroxyacetone kinase complex is composed of a homodimer of DhaM, a homodimer of DhaK and the subunit DhaL. DhaL also forms a complex with DhaR. Mg(2+) serves as cofactor.

The protein localises to the cytoplasm. It catalyses the reaction dihydroxyacetone + phosphoenolpyruvate = dihydroxyacetone phosphate + pyruvate. Its pathway is polyol metabolism; glycerol degradation. ADP-binding subunit of the dihydroxyacetone kinase, which is responsible for the phosphoenolpyruvate (PEP)-dependent phosphorylation of dihydroxyacetone. DhaL-ADP is converted to DhaL-ATP via a phosphoryl group transfer from DhaM and transmits it to dihydroxyacetone bound to DhaK. DhaL also acts as coactivator of the transcription activator DhaR by binding to the sensor domain of DhaR. In the presence of dihydroxyacetone, DhaL-ADP displaces DhaK and stimulates DhaR activity. In the absence of dihydroxyacetone, DhaL-ADP is converted by the PTS to DhaL-ATP, which does not bind to DhaR. This Escherichia coli (strain K12) protein is PEP-dependent dihydroxyacetone kinase, ADP-binding subunit DhaL.